The sequence spans 121 residues: Small ribosomal subunit protein bS16 (121 aa).

Residues 88-121 are disordered; the sequence is GKAKLEKEKKAKAKTKEEENEGSKTESGSNEAES. Residues 90–111 are compositionally biased toward basic and acidic residues; it reads AKLEKEKKAKAKTKEEENEGSK. Positions 112-121 are enriched in polar residues; it reads TESGSNEAES.

The protein belongs to the bacterial ribosomal protein bS16 family.

This Prochlorococcus marinus (strain MIT 9215) protein is Small ribosomal subunit protein bS16.